Consider the following 983-residue polypeptide: Alanine--tRNA ligase, mitochondrial (983 aa).

Residues 1-24 (MTSTTGLRNLTLSFKKQLTTSTRT) constitute a mitochondrion transit peptide. Serine 504 bears the Phosphoserine mark. Residues histidine 625, histidine 629, cysteine 744, and histidine 748 each contribute to the Zn(2+) site. Serine 975 carries the post-translational modification Phosphoserine.

The protein belongs to the class-II aminoacyl-tRNA synthetase family. Monomer. Requires Zn(2+) as cofactor.

The protein resides in the cytoplasm. It is found in the mitochondrion. The catalysed reaction is tRNA(Ala) + L-alanine + ATP = L-alanyl-tRNA(Ala) + AMP + diphosphate. Functionally, catalyzes the attachment of alanine to tRNA(Ala) in a two-step reaction: alanine is first activated by ATP to form Ala-AMP and then transferred to the acceptor end of tRNA(Ala). Also edits incorrectly charged tRNA(Ala) via its editing domain. This Saccharomyces cerevisiae (strain ATCC 204508 / S288c) (Baker's yeast) protein is Alanine--tRNA ligase, mitochondrial.